Reading from the N-terminus, the 770-residue chain is MAYGWWRRRRRRWRRWRRRPWRRRWRTRRRRPARRRGRRRNVRRRRRGGRWRRRYRRWKRKGRRRKKAKIIIRQWQPNYRRRCNIVGYIPVLICGENTVSRNYATHSDDTNYPGPLGGGMTTDKFTLRILYDEYKRFMNYWTASNEDLDLCRYLGVNMYFFRHPDVDFIIKINTMPPFLDTELTAPSIHPGMLALDKRARWIPSLKSRPGKKHYIKIRVGAPKMFTDKWYPQTDLCDMVLLTVYATAADMQYPFGSPLTDSVVVNFQVLQSMYDQNISILPDQKSEREKLLTQITDYIPFYNTTQTIAQLKPFIDAGNITPNTPATTWGSYINTTKFTTAATTTYTYPGTTTTTVTMLTCNDSWYRGTVYNDKIKNLPKQAATLYSKATKTLLGNTFTTDDHTLEYHGGLYSSIWLSPGRSYFETTGAYTDIKYNPFTDRGEGNMLWIDWLSKKNMNYDKVQSKCLISDLPLWAAAYGYVEFCAKSTGDQNIHMNARLLIRSPFTDPQLLVHTDPTKGFVPYSLNFGNGKMPGGSSNVPIRMRAKWYPTLFHQQEVLEALAQSGPFAYHSDIKKVSLGMKYRFKWIWGGNPVRQQVVRNPCKETHSSGNRVPRSLQIVDPKYNSPELTFHTWDFRRGLFGPKAIQRMQQQPTTTDIFSAGHKRPRRDTEVYHSSQEGEQKESLLFPPVKLLRRVPPWEDSQQEESGSQSSEEETQTVSQQLKQQLQQQRILGVKLRLLFNQVQKIQQNQDINPTLLPRGGDLASLFQIAP.

The span at 647–656 (MQQQPTTTDI) shows a compositional bias: polar residues. Disordered regions lie at residues 647-682 (MQQQ…QKES) and 697-717 (WEDS…TQTV). Over residues 666-681 (RDTEVYHSSQEGEQKE) the composition is skewed to basic and acidic residues. The segment covering 703–717 (EESGSQSSEEETQTV) has biased composition (low complexity).

Belongs to the anelloviridae capsid protein family.

The protein resides in the virion. In terms of biological role, may self assemble to form an icosahedral capsid. Presumably essential to initiate and monitor viral genome replication by a rolling circle mechanism. The protein is Probable capsid and replication-associated protein of Homo sapiens (Human).